Reading from the N-terminus, the 913-residue chain is Zinc finger protein 112 (913 aa).

Residues 8-79 enclose the KRAB domain; the sequence is VTFKDVAVVF…ETETPRDGCS (72 aa). Residue K256 forms a Glycyl lysine isopeptide (Lys-Gly) (interchain with G-Cter in SUMO2) linkage. Residues 258–280 form a C2H2-type 1; degenerate zinc finger; the sequence is YPCTGYRKAFSNDSSSEVHQQFH. Residues 443–465 form a C2H2-type 2; degenerate zinc finger; that stretch reads YNSEECGNGFSLASHFQDLQIVH. A C2H2-type 3; degenerate zinc finger spans residues 471–493; that stretch reads YKRYVCSNSFSHNLYLQGHPKIH. The segment at 497-519 adopts a C2H2-type 4; degenerate zinc-finger fold; that stretch reads KPRKEHGNGFNWSSKLKDHQRVH. C2H2-type zinc fingers lie at residues 525-547, 553-575, 581-603, 609-631, 637-659, 665-687, 693-715, 721-743, 749-771, 777-799, 805-827, 833-855, and 861-883; these read YKCN…QRVH, YKCE…QRVH, FKCE…QRVH, YQCD…QSVH, YICE…QRVH, YKCE…RRVH, YKCE…HRVH, and YKCD…QRVH. K890 is covalently cross-linked (Glycyl lysine isopeptide (Lys-Gly) (interchain with G-Cter in SUMO2)).

This sequence belongs to the krueppel C2H2-type zinc-finger protein family.

Its subcellular location is the nucleus. May be involved in transcriptional regulation. This is Zinc finger protein 112 (ZNF112) from Homo sapiens (Human).